The sequence spans 1435 residues: DNA polymerase III PolC-type (1435 aa).

The Exonuclease domain maps to 420–576; that stretch reads YVVFDVETTG…YDTEATAYIF (157 aa).

The protein belongs to the DNA polymerase type-C family. PolC subfamily.

Its subcellular location is the cytoplasm. It catalyses the reaction DNA(n) + a 2'-deoxyribonucleoside 5'-triphosphate = DNA(n+1) + diphosphate. Functionally, required for replicative DNA synthesis. This DNA polymerase also exhibits 3' to 5' exonuclease activity. The polypeptide is DNA polymerase III PolC-type (Staphylococcus aureus).